A 186-amino-acid chain; its full sequence is Peptidyl-tRNA hydrolase (186 aa).

Tyr14 lines the tRNA pocket. The Proton acceptor role is filled by His19. Tyr64, Asn66, and Asn112 together coordinate tRNA.

Belongs to the PTH family. Monomer.

The protein resides in the cytoplasm. It carries out the reaction an N-acyl-L-alpha-aminoacyl-tRNA + H2O = an N-acyl-L-amino acid + a tRNA + H(+). Hydrolyzes ribosome-free peptidyl-tRNAs (with 1 or more amino acids incorporated), which drop off the ribosome during protein synthesis, or as a result of ribosome stalling. Its function is as follows. Catalyzes the release of premature peptidyl moieties from peptidyl-tRNA molecules trapped in stalled 50S ribosomal subunits, and thus maintains levels of free tRNAs and 50S ribosomes. In Bacillus anthracis, this protein is Peptidyl-tRNA hydrolase.